The chain runs to 247 residues: Carboxy-S-adenosyl-L-methionine synthase (247 aa).

Residues Tyr-40, 65–67, 90–91, 122–123, Asn-137, and Arg-204 each bind S-adenosyl-L-methionine; these read GSS, DN, and DI.

This sequence belongs to the class I-like SAM-binding methyltransferase superfamily. Cx-SAM synthase family. As to quaternary structure, homodimer.

The enzyme catalyses prephenate + S-adenosyl-L-methionine = carboxy-S-adenosyl-L-methionine + 3-phenylpyruvate + H2O. Functionally, catalyzes the conversion of S-adenosyl-L-methionine (SAM) to carboxy-S-adenosyl-L-methionine (Cx-SAM). In Pseudomonas savastanoi pv. phaseolicola (strain 1448A / Race 6) (Pseudomonas syringae pv. phaseolicola (strain 1448A / Race 6)), this protein is Carboxy-S-adenosyl-L-methionine synthase.